The primary structure comprises 354 residues: Carbonic anhydrase 12 (354 aa).

Positions 1–24 (MPHRSLRATVVLLLVILKKQPSSS) are cleaved as a signal peptide. The Extracellular segment spans residues 25–301 (APLNGSKWTY…QGLLTDTGLS (277 aa)). N-linked (GlcNAc...) asparagine glycosylation is found at N28, N42, N80, and N88. An Alpha-carbonic anhydrase domain is found at 30-290 (SKWTYVGPAG…FDERLVYISF (261 aa)). A disulfide bridge links C50 with C231. H94 functions as the Proton donor/acceptor in the catalytic mechanism. Zn(2+) is bound by residues H120, H122, and H146. A substrate-binding site is contributed by 227–228 (TT). A helical membrane pass occupies residues 302–322 (LGIILSVALAGVLGISIVLAV). The Cytoplasmic portion of the chain corresponds to 323-354 (SIWLFKRKKSKKGDNKGVIYKPAIKKEAEVHA).

It belongs to the alpha-carbonic anhydrase family. As to quaternary structure, homodimer. Zn(2+) serves as cofactor.

Its subcellular location is the membrane. The protein localises to the cell membrane. It catalyses the reaction hydrogencarbonate + H(+) = CO2 + H2O. Its activity is regulated as follows. Inhibited by acetazolamide. Reversible hydration of carbon dioxide. The protein is Carbonic anhydrase 12 of Mus musculus (Mouse).